Consider the following 95-residue polypeptide: Co-chaperonin GroES (95 aa).

Belongs to the GroES chaperonin family. As to quaternary structure, heptamer of 7 subunits arranged in a ring. Interacts with the chaperonin GroEL.

Its subcellular location is the cytoplasm. Functionally, together with the chaperonin GroEL, plays an essential role in assisting protein folding. The GroEL-GroES system forms a nano-cage that allows encapsulation of the non-native substrate proteins and provides a physical environment optimized to promote and accelerate protein folding. GroES binds to the apical surface of the GroEL ring, thereby capping the opening of the GroEL channel. In Xanthomonas axonopodis pv. citri (strain 306), this protein is Co-chaperonin GroES.